The following is a 291-amino-acid chain: MAEVTQLKRYDARPINWGKWFLIGIGMLVSAFILLVPMIYIFVQAFSKGLMPVLQNLADPDMLHAIWLTVMIALIAVPVNLVFGILLAWLVTRFNFPGRQLLLTLLDIPFAVSPVVAGLVYLLFYGSNGPLGGWLDEHNLQIMFSWPGMVLVTIFVTCPFVVRELVPVMLSQGSQEDEAAILLGASGWQMFRRVTLPNIRWALLYGVVLTNARAIGEFGAVSVVSGSIRGETLSLPLQIELLEQDYNTVGSFTAAALLTLMAIITLFLKSMLQWRLENQEKRAQQEEHHEH.

At 1 to 22 (MAEVTQLKRYDARPINWGKWFL) the chain is on the cytoplasmic side. The helical transmembrane segment at 23–43 (IGIGMLVSAFILLVPMIYIFV) threads the bilayer. Residues 44 to 69 (QAFSKGLMPVLQNLADPDMLHAIWLT) lie on the Periplasmic side of the membrane. The 205-residue stretch at 66–270 (IWLTVMIALI…MAIITLFLKS (205 aa)) folds into the ABC transmembrane type-1 domain. The helical transmembrane segment at 70 to 90 (VMIALIAVPVNLVFGILLAWL) threads the bilayer. The Cytoplasmic segment spans residues 91–104 (VTRFNFPGRQLLLT). Residues 105-125 (LLDIPFAVSPVVAGLVYLLFY) traverse the membrane as a helical segment. Residues 126–141 (GSNGPLGGWLDEHNLQ) lie on the Periplasmic side of the membrane. Residues 142 to 162 (IMFSWPGMVLVTIFVTCPFVV) form a helical membrane-spanning segment. At 163 to 200 (RELVPVMLSQGSQEDEAAILLGASGWQMFRRVTLPNIR) the chain is on the cytoplasmic side. Residues 201–221 (WALLYGVVLTNARAIGEFGAV) form a helical membrane-spanning segment. The Periplasmic portion of the chain corresponds to 222-247 (SVVSGSIRGETLSLPLQIELLEQDYN). A helical membrane pass occupies residues 248–268 (TVGSFTAAALLTLMAIITLFL). Topologically, residues 269–291 (KSMLQWRLENQEKRAQQEEHHEH) are cytoplasmic.

Belongs to the binding-protein-dependent transport system permease family. CysTW subfamily. As to quaternary structure, the complex is composed of two ATP-binding proteins (CysA), two transmembrane proteins (CysT and CysW) and a solute-binding protein (CysP).

The protein localises to the cell inner membrane. Part of the ABC transporter complex CysAWTP (TC 3.A.1.6.1) involved in sulfate/thiosulfate import. Probably responsible for the translocation of the substrate across the membrane. The sequence is that of Sulfate transport system permease protein CysW (cysW) from Escherichia coli O6:H1 (strain CFT073 / ATCC 700928 / UPEC).